A 475-amino-acid polypeptide reads, in one-letter code: Proton-coupled amino acid transporter 1 (475 aa).

Basic and acidic residues predominate over residues 1-15 (MSTQRLRNEDYHDYS). Residues 1 to 32 (MSTQRLRNEDYHDYSSTDVSPEESPSEGLGSF) are disordered. Over 1-50 (MSTQRLRNEDYHDYSSTDVSPEESPSEGLGSFSPGSYQRLGENSSMTWFQ) the chain is Cytoplasmic. The helical transmembrane segment at 51–71 (TLIHLLKGNIGTGLLGLPLAV) threads the bilayer. Residues 72–77 (KNAGLL) lie on the Extracellular side of the membrane. A helical membrane pass occupies residues 78-98 (LGPLSLLVIGIVAVHCMGILV). Topologically, residues 99–140 (KCAHHLCRRLNKPFLDYGDTVMYGLECSPSTWIRNHSHWGRR) are cytoplasmic. Residues 141 to 161 (IVDFFLVVTQLGFCCVYFVFL) form a helical membrane-spanning segment. The Extracellular portion of the chain corresponds to 162 to 189 (ADNFKQVIEAANGTTTNCNNNETVILTP). N-linked (GlcNAc...) asparagine glycosylation is found at Asn-173 and Asn-182. Cysteines 179 and 328 form a disulfide. The chain crosses the membrane as a helical span at residues 190-210 (TMDSRLYMLTFLPFLVLLSFI). Residues 211-214 (RNLR) lie on the Cytoplasmic side of the membrane. Residues 215–235 (ILSIFSLLANISMFVSLIMIY) form a helical membrane-spanning segment. At 236-256 (QFIVQRIPDPSHLPLVAPWKT) the chain is on the extracellular side. Residues 257-277 (YPLFFGTAIFAFEGIGVVLPL) traverse the membrane as a helical segment. The Cytoplasmic segment spans residues 278 to 288 (ENKMKDSQKFP). Residues 289–309 (LILYLGMAIITVLYISLGSLG) form a helical membrane-spanning segment. Over 310-341 (YLQFGADIKGSITLNLPNCWLYQSVKLLYSIG) the chain is Extracellular. Residues 342–362 (IFFTYALQFYVAAEIIIPAIV) form a helical membrane-spanning segment. The Cytoplasmic portion of the chain corresponds to 363–371 (SRVPERFEL). A helical membrane pass occupies residues 372-392 (VVDLSARTAMVCVTCVLAVLI). The Extracellular portion of the chain corresponds to 393 to 396 (PRLD). A helical membrane pass occupies residues 397–417 (LVISLVGSVSSSALALIIPPL). Residues 418–438 (LEVTTYYGEGISPLTITKDAL) are Cytoplasmic-facing. A helical transmembrane segment spans residues 439–459 (ISILGFVGFVVGTYESLWELI). Over 460-475 (QPSHSDSSTNSTSAFI) the chain is Extracellular. The N-linked (GlcNAc...) asparagine glycan is linked to Asn-469.

It belongs to the amino acid/polyamine transporter 2 family. In terms of tissue distribution, widely expressed and predominantly expressed in brain. Within the brain, expression restricted to neurons and not detected in glial cells. Abundant in regions rich in neurons using glutamate and GABA such as Purkinje cells in the cerebellum and pyramidal cells in the hippocampus.

It is found in the cell membrane. The protein localises to the apical cell membrane. The protein resides in the lysosome membrane. The enzyme catalyses glycine(in) + H(+)(in) = glycine(out) + H(+)(out). It catalyses the reaction L-proline(out) + H(+)(out) = L-proline(in) + H(+)(in). The catalysed reaction is D-proline(out) + H(+)(out) = D-proline(in) + H(+)(in). It carries out the reaction L-alanine(in) + H(+)(in) = L-alanine(out) + H(+)(out). The enzyme catalyses D-alanine(in) + H(+)(in) = D-alanine(out) + H(+)(out). It catalyses the reaction L-serine(in) + H(+)(in) = L-serine(out) + H(+)(out). The catalysed reaction is D-serine(out) + H(+)(out) = D-serine(in) + H(+)(in). It carries out the reaction 4-aminobutanoate(in) + H(+)(in) = 4-aminobutanoate(out) + H(+)(out). The enzyme catalyses beta-alanine(in) + H(+)(in) = beta-alanine(out) + H(+)(out). Electrogenic proton/amino acid symporter with selectivity for small apolar L-amino acids, their D-enantiomers and selected amino acid derivatives such as 4-aminobutanoate/GABA. May be involved in the efflux from the lysosomal compartment of neutral amino acids resulting from proteolysis. May play a role in specifying sites for exocytosis in neurons. The chain is Proton-coupled amino acid transporter 1 from Rattus norvegicus (Rat).